Consider the following 253-residue polypeptide: TCF3 fusion partner (253 aa).

Disordered stretches follow at residues 49–72 and 142–211; these read SGGL…GRRR and DEGS…PELA. A Phosphoserine modification is found at Ser167. Residues 170 to 181 show a composition bias toward pro residues; that stretch reads RRTPAPPEPGSP. Thr172 is subject to Phosphothreonine. A phosphoserine mark is found at Ser180 and Ser188. Position 207 is a phosphothreonine (Thr207). Lys216 participates in a covalent cross-link: Glycyl lysine isopeptide (Lys-Gly) (interchain with G-Cter in SUMO2). Residues 234–253 form a disordered region; that stretch reads VSRGPDKLLPYPTLASPASD. Phosphoserine occurs at positions 249 and 252.

As to quaternary structure, interacts with NOL3; translocates NOL3 into the nucleus and negatively regulated TFPT-induced cell death. Component of the chromatin remodeling INO80 complex; specifically part of a complex module associated with the N-terminus of INO80.

It is found in the nucleus. Its function is as follows. Appears to promote apoptosis in a p53/TP53-independent manner. In terms of biological role, putative regulatory component of the chromatin remodeling INO80 complex which is involved in transcriptional regulation, DNA replication and probably DNA repair. The polypeptide is TCF3 fusion partner (TFPT) (Homo sapiens (Human)).